We begin with the raw amino-acid sequence, 131 residues long: Aspartate 1-decarboxylase (131 aa).

Catalysis depends on Ser-25, which acts as the Schiff-base intermediate with substrate; via pyruvic acid. Ser-25 carries the pyruvic acid (Ser) modification. A substrate-binding site is contributed by Thr-57. Tyr-58 (proton donor) is an active-site residue. 73–75 (GAA) is a binding site for substrate.

The protein belongs to the PanD family. As to quaternary structure, heterooctamer of four alpha and four beta subunits. The cofactor is pyruvate. In terms of processing, is synthesized initially as an inactive proenzyme, which is activated by self-cleavage at a specific serine bond to produce a beta-subunit with a hydroxyl group at its C-terminus and an alpha-subunit with a pyruvoyl group at its N-terminus.

The protein resides in the cytoplasm. The enzyme catalyses L-aspartate + H(+) = beta-alanine + CO2. It functions in the pathway cofactor biosynthesis; (R)-pantothenate biosynthesis; beta-alanine from L-aspartate: step 1/1. Its function is as follows. Catalyzes the pyruvoyl-dependent decarboxylation of aspartate to produce beta-alanine. This Anaeromyxobacter dehalogenans (strain 2CP-C) protein is Aspartate 1-decarboxylase.